Here is a 1508-residue protein sequence, read N- to C-terminus: MSLGPGGFEATPNSVMPSDASLHNQSHHTDSLTNNDSIASTEQREKEVHQLARKYTQNSVYSTTSQNPFAAEPGSKLDPNGGNFSARAWAKAMLQTHTDDNQAHPLRTLGVSFSNLNVYGFGFDTDYQKSVGNIWLEAVGLVRKLMGQRERKIEILRDLEGLVEAGEMLVVLGPPGAGCSTFLKTLTGQTHGFYVDDKSNLNYQGVTPKQLIKNFRGEAIYTAEVDVHFPNITVGDTLFFAARARAPRHIPGGATIDQYAEHMRDVIMASFGISHTKNTIVGNDFIRGVSGGERKRVSISEACLSQAPLQCWDNSTRGLDSANAIEFCKTLRMQTEINGATACVAIYQAPQAAYDYFDKVLVLYKGRQIYFGPTAQAKQYFLNMGFVCPDRQTDADFLTSMTSHLERVVQPGYENQVPRTPDEFAARWKASRERAELLNQIEMYNSKYATGGEHLERFKESRRAQQAKAQRVSSPYTLSYTQQIKLCLWRSWVRLKGDPSITISSAMGNAIIALIISSMFFNLKDDTSSFFQRGSLLFFAIVINAFSSGLEMLTLYAQRPIVEKHSRFALYHPSAEAIASMLMDLPYKTLNAISSNLILYFMTNLRREPGNFFFFVFTSFVLTLTMSMFFRSIASLTRSLVEALPFAAILITGLTMYTGFTIPTSYMPGWSRWMAYIDPIAYGFESIMVNEFSGREFLCVNYVPAGPSYNVGGNNRVCSTVGSVPGQPFVLGDDYIRSTYGYEASRKWRNVGIIFAFMVILCAIYLVASDFITEKKSKGEILVFRRGHKNLDRSTGQDDVEGGSERTTTAANTKSDDIAIIEQQTAIFQWKDICYDIQIQKERRRILDHVDGWVKPGTLTALMGVSGAGKTTLLDVLASRTTMGVISGEMLVDGKERDDSFQRKTGYAQQQDLHLSTATVREALTFSALLRQPAHIPREEKIAYVTEVIKLLEMTEFADAVVGIPGEGLNVEQRKRLTIGVELAARPALLLFLDEPTSGLDSQTSWAILDLLDKLKKNGQAILCTIHQPSAMLFQRFDRLLFLKSGGQTVYYGDVGENSKILIDYFTRNGGPPCPPAANPAEWMLEVIGAAPGSHTDIDWHDTWRKSPEYAYVQAHLAELKEERSRMTDLSRTASRQAHDAASFREFAAPFWAQFYEVQLRVFQQLWRTPTYIYSKAFLCVSTSLYVGFSLYNTPNTLQGLQNQMFAIFTLFFLFGQFIQQIMPHFVAQRALYEARERPSKTYSWKAFIMSNIIVELPWNTLMSVLLFLCWYYPIGLSHNAEATDSTALRGAQMWLFVWVFLMFASTFAHFMIAALDTAENAGNMGNLLFTLCVIFCGILTTPEQMPRFWIFMYRVSPFTYLVGGMMAVGVADSSVTCAANEYLHFDPVNGTCGEYMAQYQAMAGGYVQNPSATSNCAFCPMGDTNVFLKTVHAEYSNVWRNFGLMWVFVVFNAFAACGLYYWARVPKRPTIEKEAAPIRAEGSLDSETVVGRTSAVEQQDAEKRAAF.

Disordered regions lie at residues 1-35 (MSLGPGGFEATPNSVMPSDASLHNQSHHTDSLTNN) and 54-82 (KYTQNSVYSTTSQNPFAAEPGSKLDPNGG). The segment covering 11 to 24 (TPNSVMPSDASLHN) has biased composition (polar residues). Asn24 and Asn35 each carry an N-linked (GlcNAc...) asparagine glycan. The segment covering 55–68 (YTQNSVYSTTSQNP) has biased composition (polar residues). Asn83, Asn231, and Asn314 each carry an N-linked (GlcNAc...) asparagine glycan. An ABC transporter 1 domain is found at 136-390 (LEAVGLVRKL…FLNMGFVCPD (255 aa)). A run of 5 helical transmembrane segments spans residues 501-521 (ITISSAMGNAIIALIISSMFF), 536-556 (LLFFAIVINAFSSGLEMLTLY), 610-630 (GNFFFFVFTSFVLTLTMSMFF), 643-663 (ALPFAAILITGLTMYTGFTIP), and 752-772 (GIIFAFMVILCAIYLVASDFI). Positions 828–1070 (FQWKDICYDI…ILIDYFTRNG (243 aa)) constitute an ABC transporter 2 domain. Position 864–871 (864–871 (GVSGAGKT)) interacts with ATP. 4 consecutive transmembrane segments (helical) span residues 1172–1192 (YIYSKAFLCVSTSLYVGFSLY), 1206–1226 (FAIFTLFFLFGQFIQQIMPHF), 1296–1316 (LFVWVFLMFASTFAHFMIAAL), and 1322–1342 (AGNMGNLLFTLCVIFCGILTT). Asn1390 carries N-linked (GlcNAc...) asparagine glycosylation. A helical transmembrane segment spans residues 1443–1463 (FGLMWVFVVFNAFAACGLYYW).

This sequence belongs to the ABC transporter superfamily. ABCG family. PDR (TC 3.A.1.205) subfamily.

It localises to the cell membrane. Its function is as follows. ABC-type transporter; part of the gene cluster that mediates the biosynthesis of the sesterterpenes ophiobolins, fungal phytotoxins with potential anti-cancer activities. Acts as a specific transporter involved in ophiobolins secretion. The sequence is that of ABC-type transporter oblD from Cochliobolus heterostrophus (strain C5 / ATCC 48332 / race O) (Southern corn leaf blight fungus).